Consider the following 109-residue polypeptide: uncharacterized protein (109 aa).

A coiled-coil region spans residues 27 to 89 (KEEAHQFRDK…LKRIDELIAV (63 aa)).

This is an uncharacterized protein from Streptococcus pneumoniae.